The primary structure comprises 122 residues: Small ribosomal subunit protein uS13 (122 aa).

A disordered region spans residues 93-122 (RLSLPVRGQRTKTNSRTRKGKRKTVAGKKK). Basic residues predominate over residues 101–122 (QRTKTNSRTRKGKRKTVAGKKK).

The protein belongs to the universal ribosomal protein uS13 family. Part of the 30S ribosomal subunit. Forms a loose heterodimer with protein S19. Forms two bridges to the 50S subunit in the 70S ribosome.

Functionally, located at the top of the head of the 30S subunit, it contacts several helices of the 16S rRNA. In the 70S ribosome it contacts the 23S rRNA (bridge B1a) and protein L5 of the 50S subunit (bridge B1b), connecting the 2 subunits; these bridges are implicated in subunit movement. Contacts the tRNAs in the A and P-sites. This is Small ribosomal subunit protein uS13 from Chlamydia abortus (strain DSM 27085 / S26/3) (Chlamydophila abortus).